Reading from the N-terminus, the 190-residue chain is Somatotropin (190 aa).

Residue His19 coordinates Zn(2+). A disulfide bond links Cys52 and Cys163. At Ser105 the chain carries Phosphoserine. Glu172 contacts Zn(2+). Residues Cys180 and Cys188 are joined by a disulfide bond.

This sequence belongs to the somatotropin/prolactin family.

It is found in the secreted. Its function is as follows. Plays an important role in growth control. Its major role in stimulating body growth is to stimulate the liver and other tissues to secrete IGF1. It stimulates both the differentiation and proliferation of myoblasts. It also stimulates amino acid uptake and protein synthesis in muscle and other tissues. The protein is Somatotropin (GH1) of Balaenoptera borealis (Sei whale).